The sequence spans 68 residues: Beta-defensin 1 (68 aa).

An N-terminal signal peptide occupies residues 1–21 (MRTSYLLLFILCLVLCDMDSG). A propeptide spanning residues 22 to 32 (DTFLTGLGHRS) is cleaved from the precursor. Intrachain disulfides connect C37-C66, C44-C59, and C49-C67.

The protein belongs to the beta-defensin family. Monomer. Homodimer.

The protein resides in the secreted. Its subcellular location is the membrane. Functionally, has bactericidal activity. May act as a ligand for C-C chemokine receptor CCR6. Positively regulates the sperm motility and bactericidal activity in a CCR6-dependent manner. Binds to CCR6 and triggers Ca2+ mobilization in the sperm which is important for its motility. This Saguinus oedipus (Cotton-top tamarin) protein is Beta-defensin 1 (DEFB1).